We begin with the raw amino-acid sequence, 474 residues long: Cysteine--tRNA ligase (474 aa).

Zn(2+) is bound at residue C30. The 'HIGH' region signature appears at 32 to 42; sequence PTVYNYAHIGN. Zn(2+)-binding residues include C215, H240, and E244. A 'KMSKS' region motif is present at residues 272 to 276; that stretch reads KMSKS. Residue K275 participates in ATP binding.

Belongs to the class-I aminoacyl-tRNA synthetase family. As to quaternary structure, monomer. The cofactor is Zn(2+).

It localises to the cytoplasm. It carries out the reaction tRNA(Cys) + L-cysteine + ATP = L-cysteinyl-tRNA(Cys) + AMP + diphosphate. The chain is Cysteine--tRNA ligase from Brachyspira hyodysenteriae (strain ATCC 49526 / WA1).